The following is a 482-amino-acid chain: Glutamyl-tRNA(Gln) amidotransferase subunit A (482 aa).

Active-site charge relay system residues include lysine 75 and serine 150. Serine 174 (acyl-ester intermediate) is an active-site residue.

Belongs to the amidase family. GatA subfamily. Heterotrimer of A, B and C subunits.

The catalysed reaction is L-glutamyl-tRNA(Gln) + L-glutamine + ATP + H2O = L-glutaminyl-tRNA(Gln) + L-glutamate + ADP + phosphate + H(+). Its function is as follows. Allows the formation of correctly charged Gln-tRNA(Gln) through the transamidation of misacylated Glu-tRNA(Gln) in organisms which lack glutaminyl-tRNA synthetase. The reaction takes place in the presence of glutamine and ATP through an activated gamma-phospho-Glu-tRNA(Gln). This chain is Glutamyl-tRNA(Gln) amidotransferase subunit A, found in Cyanothece sp. (strain PCC 7425 / ATCC 29141).